The following is a 184-amino-acid chain: Endoribonuclease YbeY (184 aa).

Positions 146, 150, and 156 each coordinate Zn(2+).

It belongs to the endoribonuclease YbeY family. Zn(2+) is required as a cofactor.

The protein resides in the cytoplasm. Its function is as follows. Single strand-specific metallo-endoribonuclease involved in late-stage 70S ribosome quality control and in maturation of the 3' terminus of the 16S rRNA. This Nostoc sp. (strain PCC 7120 / SAG 25.82 / UTEX 2576) protein is Endoribonuclease YbeY.